Here is a 238-residue protein sequence, read N- to C-terminus: Glycerol uptake facilitator protein 4 (238 aa).

Helical transmembrane passes span 2 to 22 (IHQL…GVGV) and 39 to 59 (IFAI…FGNV). The NPA 1 motif lies at 62-64 (NPA). 3 consecutive transmembrane segments (helical) span residues 80-100 (FIPY…IVWI), 135-155 (FFVE…ISEV), and 158-178 (PGIV…GLGG). An NPA 2 motif is present at residues 185 to 187 (NLA). A helical transmembrane segment spans residues 211-231 (YGIIVPGIAPFVGAACAALFM).

It belongs to the MIP/aquaporin (TC 1.A.8) family.

The protein localises to the cell membrane. Its function is as follows. Transporter that facilitates the transmembrane diffusion of water, dihydroxyacetone, glycerol, urea, H(2)O(2) and D/L-lactic acid. Is involved in the cellular racemization of lactate and lactate metabolism, but has likely a more general physiological role. The transported molecule is indeed lactic acid and not the lactate anion, in agreement with the assumption that, with very few exceptions, MIPs (major intrinsic proteins) only facilitate the transport of uncharged solutes. This Lactiplantibacillus plantarum (strain ATCC BAA-793 / NCIMB 8826 / WCFS1) (Lactobacillus plantarum) protein is Glycerol uptake facilitator protein 4.